A 698-amino-acid chain; its full sequence is Testis-specific gene 10 protein (698 aa).

Serine 163 is subject to Phosphoserine. The tract at residues 556–689 (QMANERISMQ…SPDRGLDRSL (134 aa)) is interaction with HIF1A. Residues 659 to 670 (HMSSTMKPNTKC) are compositionally biased toward polar residues. The interval 659–685 (HMSSTMKPNTKCHSPERAHHRSPDRGL) is disordered. Positions 671-685 (HSPERAHHRSPDRGL) are enriched in basic and acidic residues. Serine 688 is subject to Phosphoserine.

It belongs to the CEP135/TSGA10 family. As to quaternary structure, interacts with HIF1A. Processed into N-terminal 27-kDa and C-terminal 55-kDa fragments. In terms of tissue distribution, expressed in the testis, in spermatozoa (at protein level). Expressed in actively dividing fetal tissues, including sternum, intestine, limb, kidney and stomach.

The protein resides in the cytoplasm. Its subcellular location is the cytoskeleton. The protein localises to the microtubule organizing center. It is found in the centrosome. It localises to the centriole. Its function is as follows. Plays a role in spermatogenesis. When overexpressed, prevents nuclear localization of HIF1A. This Homo sapiens (Human) protein is Testis-specific gene 10 protein (TSGA10).